Consider the following 792-residue polypeptide: Chloride channel protein CLC-d (792 aa).

Transmembrane regions (helical) follow at residues 78 to 98 (FFSLLIGIGTGLAAVFINLSV), 119 to 139 (AGFIVYLLINLVLVFSSAYII), 170 to 190 (RTLIGKIFGSIGSVGGGLALG), 195 to 215 (LVHTGACIASLLGQGGSTKYH), 237 to 257 (GCAAGVAAAFRAPVGGVLFAL), 267 to 287 (QLMWRVFFTSAIVAVVVRTAM), 320 to 340 (LLPMAVIGVIGGLLGALFNQL), 361 to 381 (IIEACIISCITSAISFGLPLL), 451 to 471 (LLTFLAMFYTLAVVTFGTAVP), 474 to 494 (QFVPGIMIGSTYGRLVGMFVV), 508 to 528 (ALLGAASFLGGSMRMTVSLCV), and 529 to 549 (IMVEITNNLKLLPLIMLVLLI). CBS domains lie at 592 to 652 (QSQK…KVDF) and 704 to 761 (LNPS…SSAV). Residues 731–751 (HLFVVPRPSRVIGLITRKDLL) form a helical membrane-spanning segment.

It belongs to the chloride channel (TC 2.A.49) family. Homodimer. In terms of tissue distribution, broadly expressed in the plant, but predominantly in the silique.

Its subcellular location is the membrane. Functionally, voltage-gated chloride channel. The sequence is that of Chloride channel protein CLC-d (CLC-D) from Arabidopsis thaliana (Mouse-ear cress).